We begin with the raw amino-acid sequence, 317 residues long: tRNA dimethylallyltransferase (317 aa).

16–23 (GPTASGKS) serves as a coordination point for ATP. Residue 18–23 (TASGKS) coordinates substrate. Interaction with substrate tRNA regions lie at residues 41-44 (DSAQ), 165-169 (QRIQR), and 247-252 (RCVGYR).

Belongs to the IPP transferase family. As to quaternary structure, monomer. It depends on Mg(2+) as a cofactor.

It carries out the reaction adenosine(37) in tRNA + dimethylallyl diphosphate = N(6)-dimethylallyladenosine(37) in tRNA + diphosphate. Its function is as follows. Catalyzes the transfer of a dimethylallyl group onto the adenine at position 37 in tRNAs that read codons beginning with uridine, leading to the formation of N6-(dimethylallyl)adenosine (i(6)A). This is tRNA dimethylallyltransferase from Nitrosomonas eutropha (strain DSM 101675 / C91 / Nm57).